The primary structure comprises 282 residues: Energy-coupling factor transporter ATP-binding protein EcfA1 (282 aa).

The ABC transporter domain maps to 9–243 (IEIDNLSFKY…NDELLNIGLD (235 aa)). Position 43–50 (43–50 (GHNGSGKS)) interacts with ATP.

Belongs to the ABC transporter superfamily. Energy-coupling factor EcfA family. Forms a stable energy-coupling factor (ECF) transporter complex composed of 2 membrane-embedded substrate-binding proteins (S component), 2 ATP-binding proteins (A component) and 2 transmembrane proteins (T component).

It is found in the cell membrane. Functionally, ATP-binding (A) component of a common energy-coupling factor (ECF) ABC-transporter complex. Unlike classic ABC transporters this ECF transporter provides the energy necessary to transport a number of different substrates. This chain is Energy-coupling factor transporter ATP-binding protein EcfA1, found in Ligilactobacillus salivarius (strain UCC118) (Lactobacillus salivarius).